The primary structure comprises 161 residues: 2-C-methyl-D-erythritol 2,4-cyclodiphosphate synthase (161 aa).

A divalent metal cation is bound by residues aspartate 11 and histidine 13. 4-CDP-2-C-methyl-D-erythritol 2-phosphate-binding positions include 11 to 13 (DIH) and 37 to 38 (HS). Residue histidine 45 coordinates a divalent metal cation. 4-CDP-2-C-methyl-D-erythritol 2-phosphate-binding positions include 59 to 61 (DIG), 135 to 138 (TTNE), and arginine 145.

The protein belongs to the IspF family. As to quaternary structure, homotrimer. Requires a divalent metal cation as cofactor.

It carries out the reaction 4-CDP-2-C-methyl-D-erythritol 2-phosphate = 2-C-methyl-D-erythritol 2,4-cyclic diphosphate + CMP. The protein operates within isoprenoid biosynthesis; isopentenyl diphosphate biosynthesis via DXP pathway; isopentenyl diphosphate from 1-deoxy-D-xylulose 5-phosphate: step 4/6. Functionally, involved in the biosynthesis of isopentenyl diphosphate (IPP) and dimethylallyl diphosphate (DMAPP), two major building blocks of isoprenoid compounds. Catalyzes the conversion of 4-diphosphocytidyl-2-C-methyl-D-erythritol 2-phosphate (CDP-ME2P) to 2-C-methyl-D-erythritol 2,4-cyclodiphosphate (ME-CPP) with a corresponding release of cytidine 5-monophosphate (CMP). The polypeptide is 2-C-methyl-D-erythritol 2,4-cyclodiphosphate synthase (Thermosynechococcus vestitus (strain NIES-2133 / IAM M-273 / BP-1)).